We begin with the raw amino-acid sequence, 114 residues long: PDZK1-interacting protein 1 (114 aa).

The Extracellular portion of the chain corresponds to methionine 1–glutamine 28. Residues proline 29 to asparagine 51 traverse the membrane as a helical segment. Topologically, residues histidine 52 to methionine 114 are cytoplasmic. Serine 85 is subject to Phosphoserine. The tract at residues histidine 95–methionine 114 is disordered. A compositionally biased stretch (basic and acidic residues) spans glutamate 105–methionine 114.

The protein belongs to the PDZK1-interacting protein 1/SMIM24 family. As to quaternary structure, forms a heterodimer (via N-terminal transmembrane helix) with SLC5A2/SGLT2 (via TM13); this interaction enhances SLC5A2 transporter activity. Interacts with PDZK1.

It localises to the apical cell membrane. Auxiliary protein of electrogenic Na(+)-coupled sugar symporter SLC5A2/SGLT2 and SLC5A1/SGLT1. Essential for the transporter activity of SLC5A2/SGLT2 but not SLC5A1/SGLT1. The chain is PDZK1-interacting protein 1 from Pongo abelii (Sumatran orangutan).